We begin with the raw amino-acid sequence, 356 residues long: Protein-arginine kinase (356 aa).

One can recognise a Phosphagen kinase C-terminal domain in the interval 24-254 (IVLSSRIRLA…MQLIQQERAA (231 aa)). Residues 27 to 31 (SSRIR), H91, R125, 176 to 180 (RASVM), and 207 to 212 (RGIYGE) contribute to the ATP site. Residues 337–342 (RDERRA) carry the RDXXRA motif of the pArg binding pocket involved in allosteric regulation motif.

This sequence belongs to the ATP:guanido phosphotransferase family.

It catalyses the reaction L-arginyl-[protein] + ATP = N(omega)-phospho-L-arginyl-[protein] + ADP + H(+). Appears to be allosterically activated by the binding of pArg-containing polypeptides to the pArg-binding pocket localized in the C-terminal domain of McsB. Its function is as follows. Catalyzes the specific phosphorylation of arginine residues in a large number of proteins. Is part of the bacterial stress response system. Protein arginine phosphorylation has a physiologically important role and is involved in the regulation of many critical cellular processes, such as protein homeostasis, motility, competence, and stringent and stress responses, by regulating gene expression and protein activity. This chain is Protein-arginine kinase, found in Halalkalibacterium halodurans (strain ATCC BAA-125 / DSM 18197 / FERM 7344 / JCM 9153 / C-125) (Bacillus halodurans).